We begin with the raw amino-acid sequence, 260 residues long: ARL14 effector protein (260 aa).

At Met1 the chain carries N-acetylmethionine. Residue Lys177 forms a Glycyl lysine isopeptide (Lys-Gly) (interchain with G-Cter in SUMO2) linkage. The residue at position 183 (Ser183) is a Phosphoserine.

In terms of assembly, interacts with ARL14 and MYO1E.

The protein resides in the cytoplasm. Through its interaction with ARL14 and MYO1E, may connect MHC class II-containing cytoplasmic vesicles to the actin network and hence controls the movement of these vesicles along the actin cytoskeleton in dendritic cells. This chain is ARL14 effector protein (ARL14EP), found in Bos taurus (Bovine).